The following is a 35-amino-acid chain: Cytochrome b6-f complex subunit 5 (35 aa).

The helical transmembrane segment at 5 to 25 threads the bilayer; sequence LLTGIVLGSIFITLLGLLAAA.

It belongs to the PetG family. The 4 large subunits of the cytochrome b6-f complex are cytochrome b6, subunit IV (17 kDa polypeptide, PetD), cytochrome f and the Rieske protein, while the 4 small subunits are PetG, PetL, PetM and PetN. The complex functions as a dimer.

It is found in the plastid. The protein localises to the chloroplast thylakoid membrane. Component of the cytochrome b6-f complex, which mediates electron transfer between photosystem II (PSII) and photosystem I (PSI), cyclic electron flow around PSI, and state transitions. PetG is required for either the stability or assembly of the cytochrome b6-f complex. The polypeptide is Cytochrome b6-f complex subunit 5 (Cyanidium caldarium (Red alga)).